Reading from the N-terminus, the 417-residue chain is MLEQMGKAAREAAWQLAQLSTKQKNQALIRIADLLEQESAIILEANQLDMIQAREQGMSEALLDRLLLTPERLTAIAHDVRQVCGLSDPVGEVIDGSLLDSGLRLERRRVPLGVVGVIYEARPNVTIDVASLCLKTGNAVILRGGKETHNTNQATVKVIQQALEQSGLPAAAVQAIDKPDRELVIQLLKLDRYVDMLIPRGGAGLHKLCREQSTIPVITGGIGVCHTFVDESADFDKALTVITNAKVQRPSACNALETLLVHQKIAADFLPALSKYMEEQGVTLHASKSAMVFLKDGAAKVVDVTEADYRDEWLSLDMNVEIVSDMEQAIDHIRTYGTSHSDAILTQSLHNADYFVRQVDSAAVYVNASTRFTDGGQFGLGAEVAVSTQKLHSRGPMGLDALTTYKWIGYGEDLVRK.

It belongs to the gamma-glutamyl phosphate reductase family.

Its subcellular location is the cytoplasm. The enzyme catalyses L-glutamate 5-semialdehyde + phosphate + NADP(+) = L-glutamyl 5-phosphate + NADPH + H(+). It functions in the pathway amino-acid biosynthesis; L-proline biosynthesis; L-glutamate 5-semialdehyde from L-glutamate: step 2/2. Catalyzes the NADPH-dependent reduction of L-glutamate 5-phosphate into L-glutamate 5-semialdehyde and phosphate. The product spontaneously undergoes cyclization to form 1-pyrroline-5-carboxylate. In Photorhabdus laumondii subsp. laumondii (strain DSM 15139 / CIP 105565 / TT01) (Photorhabdus luminescens subsp. laumondii), this protein is Gamma-glutamyl phosphate reductase.